The chain runs to 446 residues: Ribosomal protein uS12 methylthiotransferase RimO (446 aa).

Residues P7–R118 enclose the MTTase N-terminal domain. The [4Fe-4S] cluster site is built by C16, C52, C81, C156, C160, and C163. The 230-residue stretch at T142–R371 folds into the Radical SAM core domain. The TRAM domain maps to A374–A440.

The protein belongs to the methylthiotransferase family. RimO subfamily. Requires [4Fe-4S] cluster as cofactor.

It localises to the cytoplasm. It catalyses the reaction L-aspartate(89)-[ribosomal protein uS12]-hydrogen + (sulfur carrier)-SH + AH2 + 2 S-adenosyl-L-methionine = 3-methylsulfanyl-L-aspartate(89)-[ribosomal protein uS12]-hydrogen + (sulfur carrier)-H + 5'-deoxyadenosine + L-methionine + A + S-adenosyl-L-homocysteine + 2 H(+). In terms of biological role, catalyzes the methylthiolation of an aspartic acid residue of ribosomal protein uS12. The sequence is that of Ribosomal protein uS12 methylthiotransferase RimO from Thermosynechococcus vestitus (strain NIES-2133 / IAM M-273 / BP-1).